Consider the following 322-residue polypeptide: uncharacterized protein (322 aa).

Low complexity predominate over residues 1–17 (MASMAAAIAASRSAVMS). Positions 1 to 22 (MASMAAAIAASRSAVMSGNRPL) are disordered. A2 is modified (N-acetylalanine). At S37 the chain carries Phosphoserine. Positions 81–104 (AAAADAGDVRDPARFPGLRGPTGQ) are disordered. The residue at position 130 (S130) is a Phosphoserine. Polar residues-rich tracts occupy residues 142–153 (QEPSAATVTSDA) and 161–177 (QGTQ…SSSL). The tract at residues 142 to 301 (QEPSAATVTS…DDDALFSEPA (160 aa)) is disordered. S176 is modified (phosphoserine). A compositionally biased stretch (basic and acidic residues) spans 183–203 (ARKEEEAPFWKINAERSREGP). A compositionally biased stretch (polar residues) spans 245-255 (QEQQTLPSVSA).

It localises to the cytoplasm. This is an uncharacterized protein from Mus musculus (Mouse).